The primary structure comprises 376 residues: WW domain-binding protein 4 (376 aa).

The Matrin-type zinc finger occupies 11 to 42 (KFCDYCKCWIADNRPSVEFHERGKNHKENVAR). Polar residues predominate over residues 94-111 (PTVSPVISTVQPTPTSNQ). Disordered stretches follow at residues 94-127 (PTVS…ASKG) and 192-324 (WEKP…ECLS). Positions 114–123 (EKKKKKKKKE) are enriched in basic residues. WW domains are found at residues 123–156 (EASK…KPEG) and 164–197 (TAAK…KPED). A compositionally biased stretch (basic and acidic residues) spans 219 to 272 (EDAKSSDSHSDSEGEQKKAGEASTETKKLIIKFKEKNKSTEKRIGPEIQKEKST). Phosphoserine is present on residues serine 228 and serine 230. Residues 357–375 (KKRRLENGKSRNLRQRGDD) are interaction with SNRNP200.

Component of the spliceosome B complex. Associated with U2 snRNPs. Binds splicing factors SNRPB, SNRPC and SF1. Interacts via the WW domains with the Pro-rich domains of KHDRBS1/SAM68. Interacts via the WW domains with the Pro-rich domains of WBP11. Interacts with SNRNP200.

It localises to the nucleus. The protein resides in the nucleus speckle. Involved in pre-mRNA splicing as a component of the spliceosome. May play a role in cross-intron bridging of U1 and U2 snRNPs in the mammalian A complex. This chain is WW domain-binding protein 4 (Wbp4), found in Mus musculus (Mouse).